The chain runs to 914 residues: Eukaryotic translation initiation factor 3 subunit C-like protein (914 aa).

A disordered region spans residues 1 to 44 (MSRFFTTGSDSESESSLSGEELVTKPVGGNYGKQPLLLSEDEED). Positions 8–21 (GSDSESESSLSGEE) are enriched in low complexity. Residues Ser-9, Ser-11, Ser-13, Ser-15, Ser-16, Ser-18, and Ser-39 each carry the phosphoserine modification. Lys-99 is subject to N6-acetyllysine. Disordered stretches follow at residues 157–302 (TSYK…GGEW) and 523–543 (QLTPPEGSSKSEQDQAENEGE). 4 positions are modified to phosphoserine: Ser-166, Ser-178, Ser-181, and Ser-182. Residues 166 to 190 (SADEDAEKNEEDSEGSSDEDEDEDG) show a composition bias toward acidic residues. A compositionally biased stretch (basic and acidic residues) spans 199 to 216 (KKSEAPSGESRKFLKKMD). The span at 217 to 232 (DEDEDSEDSEDDEDWD) shows a compositional bias: acidic residues. The span at 261–278 (PTTDEDKKAAEKKREDKA) shows a compositional bias: basic and acidic residues. A compositionally biased stretch (acidic residues) spans 291–300 (EEEEEDNEGG). The segment covering 523–532 (QLTPPEGSSK) has biased composition (polar residues). A Phosphothreonine modification is found at Thr-525. Lys-644 carries the post-translational modification N6-acetyllysine. A PCI domain is found at 674 to 850 (FHLHINLELL…QTVVMHRTEP (177 aa)). The segment at 886 to 914 (FRDQKDGYRKNEGYMRRGGYRQQQSQTAY) is disordered. The segment covering 887-900 (RDQKDGYRKNEGYM) has biased composition (basic and acidic residues). Phosphoserine is present on Ser-910.

It belongs to the eIF-3 subunit C family. Component of the eukaryotic translation initiation factor 3 (eIF-3) complex, which is composed of 13 subunits: EIF3A, EIF3B, EIF3C, EIF3D, EIF3E, EIF3F, EIF3G, EIF3H, EIF3I, EIF3J, EIF3K, EIF3L and EIF3M. The eIF-3 complex appears to include 3 stable modules: module A is composed of EIF3A, EIF3B, EIF3G and EIF3I; module B is composed of EIF3F, EIF3H, and EIF3M; and module C is composed of EIF3C, EIF3D, EIF3E, EIF3K and EIF3L. EIF3C of module C binds EIF3B of module A and EIF3H of module B, thereby linking the three modules. EIF3J is a labile subunit that binds to the eIF-3 complex via EIF3B. The eIF-3 complex interacts with RPS6KB1 under conditions of nutrient depletion. Mitogenic stimulation leads to binding and activation of a complex composed of MTOR and RPTOR, leading to phosphorylation and release of RPS6KB1 and binding of EIF4B to eIF-3. In terms of processing, phosphorylated. Phosphorylation is enhanced upon serum stimulation.

It is found in the cytoplasm. Functionally, component of the eukaryotic translation initiation factor 3 (eIF-3) complex, which is required for several steps in the initiation of protein synthesis. The eIF-3 complex associates with the 40S ribosome and facilitates the recruitment of eIF-1, eIF-1A, eIF-2:GTP:methionyl-tRNAi and eIF-5 to form the 43S pre-initiation complex (43S PIC). The eIF-3 complex stimulates mRNA recruitment to the 43S PIC and scanning of the mRNA for AUG recognition. The eIF-3 complex is also required for disassembly and recycling of post-termination ribosomal complexes and subsequently prevents premature joining of the 40S and 60S ribosomal subunits prior to initiation. The eIF-3 complex specifically targets and initiates translation of a subset of mRNAs involved in cell proliferation, including cell cycling, differentiation and apoptosis, and uses different modes of RNA stem-loop binding to exert either translational activation or repression. In Homo sapiens (Human), this protein is Eukaryotic translation initiation factor 3 subunit C-like protein (EIF3CL).